Consider the following 360-residue polypeptide: Phospho-N-acetylmuramoyl-pentapeptide-transferase (360 aa).

10 helical membrane passes run 27–47, 71–91, 98–118, 142–162, 168–188, 199–219, 236–256, 263–283, 288–308, and 338–358; these read VMAV…LIRF, TPTM…LLWA, VWIV…DDYL, LVLA…TFVM, YMPY…VGSS, GLAI…AYLT, ASEL…FLWF, VFMG…IAVL, ILLV…ILQV, and VIVR…VTLK.

This sequence belongs to the glycosyltransferase 4 family. MraY subfamily. The cofactor is Mg(2+).

The protein localises to the cell inner membrane. The catalysed reaction is UDP-N-acetyl-alpha-D-muramoyl-L-alanyl-gamma-D-glutamyl-meso-2,6-diaminopimeloyl-D-alanyl-D-alanine + di-trans,octa-cis-undecaprenyl phosphate = di-trans,octa-cis-undecaprenyl diphospho-N-acetyl-alpha-D-muramoyl-L-alanyl-D-glutamyl-meso-2,6-diaminopimeloyl-D-alanyl-D-alanine + UMP. It participates in cell wall biogenesis; peptidoglycan biosynthesis. Functionally, catalyzes the initial step of the lipid cycle reactions in the biosynthesis of the cell wall peptidoglycan: transfers peptidoglycan precursor phospho-MurNAc-pentapeptide from UDP-MurNAc-pentapeptide onto the lipid carrier undecaprenyl phosphate, yielding undecaprenyl-pyrophosphoryl-MurNAc-pentapeptide, known as lipid I. This Psychromonas ingrahamii (strain DSM 17664 / CCUG 51855 / 37) protein is Phospho-N-acetylmuramoyl-pentapeptide-transferase.